Reading from the N-terminus, the 189-residue chain is Effector protein NleF (189 aa).

Residues 186–189 are interaction with host caspases; sequence LQCG.

In terms of assembly, monomer. Interacts (via C-terminus) with human CASP4, CASP8 and CASP9.

Its subcellular location is the secreted. The protein localises to the host cytoplasm. Functionally, effector protein that alters host cell physiology and promotes bacterial survival in host tissues. Inhibits the catalytic activity of human CASP4, CASP8 and CASP9, and thereby inhibits apoptosis of infected host cells. The protein is Effector protein NleF (nleF) of Escherichia coli O157:H7.